The chain runs to 328 residues: G2/mitotic-specific cyclin-2 (328 aa).

Belongs to the cyclin family. Cyclin AB subfamily. As to quaternary structure, interacts with the CDC2 protein kinase to form a serine/threonine kinase holoenzyme complex also known as maturation promoting factor (MPF). The cyclin subunit imparts substrate specificity to the complex. Only expressed in organs with dividing cells.

Its function is as follows. Essential for the control of the cell cycle at the G2/M (mitosis) transition. The sequence is that of G2/mitotic-specific cyclin-2 from Medicago sativa (Alfalfa).